Consider the following 1103-residue polypeptide: Ubiquitin carboxyl-terminal hydrolase 7 (1103 aa).

The segment covering 1-11 has biased composition (low complexity); that stretch reads MNHQQQQQQQQ. Disordered regions lie at residues 1–41 and 46–65; these read MNHQ…TQNP and NVTL…DDTS. The tract at residues 1–209 is interaction with TSPYL5; that stretch reads MNHQQQQQQQ…APHGVAWDSK (209 aa). Ser-19 is subject to Phosphoserine. The span at 20 to 32 shows a compositional bias: acidic residues; the sequence is EPEDMEMEAGDTD. A phosphoserine mark is found at Ser-50 and Ser-54. An interaction with p53/TP53 and MDM2 region spans residues 54–209; that stretch reads SNAEEDMEDD…APHGVAWDSK (156 aa). The region spanning 69–196 is the MATH domain; it reads EATFQFTVER…DDKVTFEVFV (128 aa). Residues 71-206 form a necessary for nuclear localization region; it reads TFQFTVERFS…QADAPHGVAW (136 aa). The USP domain maps to 215–522; it reads VGLKNQGATC…NAYMLVYIRE (308 aa). Cys-224 serves as the catalytic Nucleophile. The active-site Proton acceptor is the His-465. The residue at position 870 (Lys-870) is an N6-acetyllysine; alternate. Residue Lys-870 forms a Glycyl lysine isopeptide (Lys-Gly) (interchain with G-Cter in SUMO2); alternate linkage. Lys-870 is covalently cross-linked (Glycyl lysine isopeptide (Lys-Gly) (interchain with G-Cter in ubiquitin); alternate). Lys-883 is covalently cross-linked (Glycyl lysine isopeptide (Lys-Gly) (interchain with G-Cter in SUMO2)). Ser-964 carries the post-translational modification Phosphoserine. N6-acetyllysine is present on residues Lys-1085 and Lys-1097.

It belongs to the peptidase C19 family. As to quaternary structure, monomer. Homodimer. Part of a complex with DAXX, MDM2, RASSF1 and USP7. Part of a complex with DAXX, MDM2 and USP7. Interacts with MDM2; the interaction is independent of p53/TP53. Interacts with DAXX; the interaction is direct and independent of MDM2 and p53/TP53. Component of a complex composed of KMT2E, OGT and USP7; the complex stabilizes KMT2E, preventing KMT2E ubiquitination and proteasomal-mediated degradation. Interacts (via MATH domain) with KMT2E. Interacts with OGT. Interacts with FOXO4; the interaction is enhanced in presence of hydrogen peroxide and occurs independently of p53/TP53. Interacts with p53/TP53; the interaction is enhanced in response to DNA damage; the interaction is impaired by TSPYL5. Interacts with PTEN; the interaction is direct. Interacts with ATXN1 and the strength of interaction is influenced by the length of the poly-Gln region in ATXN1. A weaker interaction seen with mutants having longer poly-Gln regions. Interacts with KIAA1530/UVSSA. Interacts with MEX3C and antagonizes its ability to degrade mRNA. Interacts with DNMT1 and UHRF1. Interacts with FOXP3. Interacts (via MATH domain) with RNF220. Associated component of the Polycomb group (PcG) multiprotein PRC1-like complex. Interacts with EPOP. Interacts with OTUD4 and USP9X; the interaction is direct. Interacts with CRY2. Interacts with REST. Interacts with ERCC6. Part of a complex consisting of USP7, MAGEL2 and TRIM27; directly interacts with MAGEL2; directly interacts with TRIM27. Post-translationally, polyneddylated. In terms of processing, not sumoylated. Polyubiquitinated. Ubiquitinated at Lys-870. Widely expressed. High expression is detected in brain, bone marrow, thymus and testis.

It localises to the nucleus. The protein localises to the cytoplasm. It is found in the PML body. Its subcellular location is the chromosome. The enzyme catalyses Thiol-dependent hydrolysis of ester, thioester, amide, peptide and isopeptide bonds formed by the C-terminal Gly of ubiquitin (a 76-residue protein attached to proteins as an intracellular targeting signal).. Hydrolase that deubiquitinates target proteins such as ARMC5, FOXO4, DEPTOR, KAT5, p53/TP53, MDM2, ERCC6, DNMT1, UHRF1, PTEN, KMT2E/MLL5 and DAXX. Together with DAXX, prevents MDM2 self-ubiquitination and enhances the E3 ligase activity of MDM2 towards p53/TP53, thereby promoting p53/TP53 ubiquitination and proteasomal degradation. Deubiquitinates p53/TP53, preventing degradation of p53/TP53, and enhances p53/TP53-dependent transcription regulation, cell growth repression and apoptosis. Deubiquitinates p53/TP53 and MDM2 and strongly stabilizes p53/TP53 even in the presence of excess MDM2, and also induces p53/TP53-dependent cell growth repression and apoptosis. Deubiquitination of FOXO4 in presence of hydrogen peroxide is not dependent on p53/TP53 and inhibits FOXO4-induced transcriptional activity. In association with DAXX, is involved in the deubiquitination and translocation of PTEN from the nucleus to the cytoplasm, both processes that are counteracted by PML. Deubiquitinates KMT2E preventing KMT2E proteasomal-mediated degradation. Involved in cell proliferation during early embryonic development. Involved in transcription-coupled nucleotide excision repair (TC-NER) in response to UV damage: recruited to DNA damage sites following interaction with KIAA1530/UVSSA and promotes deubiquitination of ERCC6, preventing UV-induced degradation of ERCC6. Involved in maintenance of DNA methylation via its interaction with UHRF1 and DNMT1: acts by mediating deubiquitination of UHRF1 and DNMT1, preventing their degradation and promoting DNA methylation by DNMT1. Deubiquitinates alkylation repair enzyme ALKBH3. OTUD4 recruits USP7 and USP9X to stabilize ALKBH3, thereby promoting the repair of alkylated DNA lesions. Acts as a chromatin regulator via its association with the Polycomb group (PcG) multiprotein PRC1-like complex; may act by deubiquitinating components of the PRC1-like complex. Able to mediate deubiquitination of histone H2B; it is however unsure whether this activity takes place in vivo. Exhibits a preference towards 'Lys-48'-linked ubiquitin chains. Increases regulatory T-cells (Treg) suppressive capacity by deubiquitinating and stabilizing the transcription factor FOXP3 which is crucial for Treg cell function. Plays a role in the maintenance of the circadian clock periodicity via deubiquitination and stabilization of the CRY1 and CRY2 proteins. Deubiquitinates REST, thereby stabilizing REST and promoting the maintenance of neural progenitor cells. Deubiquitinates SIRT7, inhibiting SIRT7 histone deacetylase activity and regulating gluconeogenesis. Involved in the regulation of WASH-dependent actin polymerization at the surface of endosomes and the regulation of endosomal protein recycling. It maintains optimal WASH complex activity and precise F-actin levels via deubiquitination of TRIM27 and WASHC1. Mediates the deubiquitination of phosphorylated DEPTOR, promoting its stability and leading to decreased mTORC1 signaling. The polypeptide is Ubiquitin carboxyl-terminal hydrolase 7 (Usp7) (Mus musculus (Mouse)).